Here is a 448-residue protein sequence, read N- to C-terminus: JmjC domain-containing protein D (448 aa).

A JmjC domain is found at 305-448 (EQIPQLRNDI…SLSQSFSIFP (144 aa)).

The chain is JmjC domain-containing protein D (jcdD) from Dictyostelium discoideum (Social amoeba).